We begin with the raw amino-acid sequence, 121 residues long: Small ribosomal subunit protein uS13 (121 aa).

The disordered stretch occupies residues 94-121 (GLPLRGQRTRTNARTRKGPRKAGVALKK).

Belongs to the universal ribosomal protein uS13 family. In terms of assembly, part of the 30S ribosomal subunit. Forms a loose heterodimer with protein S19. Forms two bridges to the 50S subunit in the 70S ribosome.

Its function is as follows. Located at the top of the head of the 30S subunit, it contacts several helices of the 16S rRNA. In the 70S ribosome it contacts the 23S rRNA (bridge B1a) and protein L5 of the 50S subunit (bridge B1b), connecting the 2 subunits; these bridges are implicated in subunit movement. Contacts the tRNAs in the A and P-sites. This chain is Small ribosomal subunit protein uS13, found in Ralstonia nicotianae (strain ATCC BAA-1114 / GMI1000) (Ralstonia solanacearum).